The primary structure comprises 29 residues: Protein 1.5 (29 aa).

In Escherichia phage T7 (Bacteriophage T7), this protein is Protein 1.5.